A 579-amino-acid chain; its full sequence is Protein LYRIC (579 aa).

Residues 1–48 (MAARSWQDELAQQAEEGSARLRELLSVGLGFLRTELGLDLGLEPKRYP) are Lumenal-facing. Residues 1 to 71 (MAARSWQDEL…LLLFLLGYGW (71 aa)) are activation of NF-kappa-B. A helical membrane pass occupies residues 49–69 (GWVILVGTGALGLLLLFLLGY). Topologically, residues 70–579 (GWAAACAGAR…KKKKKARRET (510 aa)) are cytoplasmic. An interaction with BCCIP region spans residues 72 to 168 (AAACAGARKK…EKSKKNKKKS (97 aa)). A disordered region spans residues 78–222 (ARKKRRSPPR…SGSLDSTIPG (145 aa)). The interval 100–204 (DDLAQLKNLR…ISHREKRQQR (105 aa)) is interaction with RELA. The span at 108–126 (LRSEEQKKKNRKKLPEKPK) shows a compositional bias: basic and acidic residues. Residues 159–168 (EKSKKNKKKS) are compositionally biased toward basic residues. Position 179 is a phosphoserine (S179). Basic residues predominate over residues 197–207 (HREKRQQRKRD). Phosphoserine occurs at positions 215 and 250. K263 is modified (N6-acetyllysine). Residues 277–579 (NLTVNGGGWS…KKKKKARRET (303 aa)) are disordered. A phosphoserine mark is found at S297, S303, and S308. Over residues 317-329 (SAWTQDTGDTNAN) the composition is skewed to polar residues. A phosphoserine mark is found at S341 and S366. Composition is skewed to polar residues over residues 351-369 (EPVSQSTTSDYQWDVSRNQ), 380-391 (NGLSSADPSSDW), and 410-420 (LKSQEPISNDQ). The tract at residues 378–440 (GLNGLSSADP…EGALPTGKSK (63 aa)) is lung-homing for mammary tumors. 2 positions are modified to phosphoserine: S412 and S423. The segment covering 421–431 (KVSDDDKEKGE) has biased composition (basic and acidic residues). Positions 438–448 (KSKKKKKKKKK) are enriched in basic residues. A compositionally biased stretch (basic and acidic residues) spans 449–470 (QGEDNSHTQDTEDLEKDTREEL). Residues S454, S475, S491, and S493 each carry the phosphoserine modification. Composition is skewed to polar residues over residues 517–533 (PSITLSKGDSDNSSSQV) and 546–565 (NAKQNSVPPSQTKSETNWES). Phosphoserine is present on S565. The span at 568–579 (QIKKKKKARRET) shows a compositional bias: basic residues.

Interacts with BCCIP, CREBBP/CBP and RELA/p65. In the mammary gland, expressed at the apical surface of epithelial cells lining ducts, as well as in the mammary fat pad. Not detected in the spleen, kidney, lung, or skin; minute amounts seen in the liver. Expressed in Purkinje neurons in the early postnatal and adult cerebellum. Overexpressed in mammary tumors (at protein level).

It is found in the endoplasmic reticulum membrane. Its subcellular location is the nucleus membrane. The protein localises to the cell junction. The protein resides in the tight junction. It localises to the nucleus. It is found in the nucleolus. Its subcellular location is the cytoplasm. The protein localises to the perinuclear region. Its function is as follows. Down-regulates SLC1A2/EAAT2 promoter activity when expressed ectopically. Activates the nuclear factor kappa-B (NF-kappa-B) transcription factor. Promotes anchorage-independent growth of immortalized melanocytes and astrocytes which is a key component in tumor cell expansion. Promotes lung metastasis and also has an effect on bone and brain metastasis, possibly by enhancing the seeding of tumor cells to the target organ endothelium. Induces chemoresistance. In Mus musculus (Mouse), this protein is Protein LYRIC (Mtdh).